The following is a 157-amino-acid chain: 2-C-methyl-D-erythritol 2,4-cyclodiphosphate synthase (157 aa).

The a divalent metal cation site is built by Asp8 and His10. Residues 8–10 (DVH) and 34–35 (HS) each bind 4-CDP-2-C-methyl-D-erythritol 2-phosphate. Position 42 (His42) interacts with a divalent metal cation. 4-CDP-2-C-methyl-D-erythritol 2-phosphate contacts are provided by residues 56–58 (DIG), 61–65 (FPDTD), 100–106 (AQAPKMA), 132–135 (TTTE), Phe139, and Arg142.

The protein belongs to the IspF family. In terms of assembly, homotrimer. The cofactor is a divalent metal cation.

The enzyme catalyses 4-CDP-2-C-methyl-D-erythritol 2-phosphate = 2-C-methyl-D-erythritol 2,4-cyclic diphosphate + CMP. The protein operates within isoprenoid biosynthesis; isopentenyl diphosphate biosynthesis via DXP pathway; isopentenyl diphosphate from 1-deoxy-D-xylulose 5-phosphate: step 4/6. In terms of biological role, involved in the biosynthesis of isopentenyl diphosphate (IPP) and dimethylallyl diphosphate (DMAPP), two major building blocks of isoprenoid compounds. Catalyzes the conversion of 4-diphosphocytidyl-2-C-methyl-D-erythritol 2-phosphate (CDP-ME2P) to 2-C-methyl-D-erythritol 2,4-cyclodiphosphate (ME-CPP) with a corresponding release of cytidine 5-monophosphate (CMP). In Pseudomonas fluorescens (strain SBW25), this protein is 2-C-methyl-D-erythritol 2,4-cyclodiphosphate synthase.